The following is a 437-amino-acid chain: Elongation factor 1-alpha (437 aa).

The region spanning Lys-4–Val-229 is the tr-type G domain. A G1 region spans residues Gly-13–Ser-20. Gly-13–Ser-20 provides a ligand contact to GTP. Ser-20 contacts Mg(2+). Positions Gly-69–Asp-73 are G2. Residues Asp-90–Gly-93 form a G3 region. GTP-binding positions include Asp-90 to His-94 and Asn-152 to Asp-155. The segment at Asn-152–Asp-155 is G4. Residues Ser-193–Trp-195 form a G5 region.

Belongs to the TRAFAC class translation factor GTPase superfamily. Classic translation factor GTPase family. EF-Tu/EF-1A subfamily.

It is found in the cytoplasm. The catalysed reaction is GTP + H2O = GDP + phosphate + H(+). Its function is as follows. GTP hydrolase that promotes the GTP-dependent binding of aminoacyl-tRNA to the A-site of ribosomes during protein biosynthesis. The polypeptide is Elongation factor 1-alpha (Aeropyrum pernix (strain ATCC 700893 / DSM 11879 / JCM 9820 / NBRC 100138 / K1)).